A 564-amino-acid polypeptide reads, in one-letter code: H/ACA ribonucleoprotein complex non-core subunit NAF1 (564 aa).

Disordered regions lie at residues 1 to 29 (MESE…ELGK), 108 to 218 (LVVQ…DSEG), 238 to 264 (DEDD…KVRG), 387 to 489 (ASWE…HPSY), and 538 to 564 (PHMY…PPPS). A compositionally biased stretch (low complexity) spans 146-157 (ASGLSLLAAYSS). The segment covering 238 to 249 (DEDDEDFDEDGA) has biased composition (acidic residues). The residue at position 250 (Thr-250) is a Phosphothreonine. At Ser-254 the chain carries Phosphoserine. Residues 388–402 (SWEHDVEPPARYVDH) show a composition bias toward basic and acidic residues. Residue Ser-403 is modified to Phosphoserine. The span at 426 to 446 (STDSVDTVTSVATTATKASSV) shows a compositional bias: low complexity. Thr-427 carries the post-translational modification Phosphothreonine. Ser-429 is subject to Phosphoserine. The residue at position 432 (Thr-432) is a Phosphothreonine. The span at 468–489 (PSINQHNQNQPQDEQYNFHPSY) shows a compositional bias: polar residues. Positions 538 to 553 (PHMYPPPPPFAPPPPN) are enriched in pro residues. The segment covering 554 to 564 (NQSHQGQPPPS) has biased composition (polar residues).

The protein belongs to the NAF1 family. In terms of assembly, during assembly of the complex, component of the box H/ACA small nucleolar ribonucleoprotein (H/ACA snoRNP) complex.

Its subcellular location is the nucleus. Its function is as follows. RNA-binding protein required for the maturation of the box H/ACA small nucleolar ribonucleoprotein (H/ACA snoRNP) complex and ribosome biogenesis. During assembly of the H/ACA snoRNP complex it associates with the complex and dissociates during complex maturation, becoming replaced by Gar1 to yield mature H/ACA snoRNP complex. The sequence is that of H/ACA ribonucleoprotein complex non-core subunit NAF1 from Drosophila melanogaster (Fruit fly).